Consider the following 123-residue polypeptide: Gamma-synuclein (123 aa).

A run of 2 repeats spans residues 20–30 (EKTKQGVTEAA) and 31–41 (EKTKEGVMYVG). Positions 20–67 (EKTKQGVTEAAEKTKEGVMYVGTKTKGERGTSVTSVAEKTKEQANAVS) are 4 X 11 AA tandem repeats of [EGSA]-K-T-K-[EQ]-[GQ]-V-X(4). One copy of the 3; approximate repeat lies at 42-56 (TKTKGERGTSVTSVA). Repeat unit 4 spans residues 57–67 (EKTKEQANAVS). Residues Ser67 and Ser72 each carry the phosphoserine modification. The segment at 93 to 123 (GVVRKEDLEPPAQDQEAKEQEEGEEAKSGGD) is disordered. The span at 107 to 123 (QEAKEQEEGEEAKSGGD) shows a compositional bias: basic and acidic residues. Residue Ser120 is modified to Phosphoserine; by BARK1, CaMK2 and CK2.

Belongs to the synuclein family. May be a centrosome-associated protein. Interacts with MYOC; affects its secretion and its aggregation. In terms of processing, phosphorylated. Phosphorylation by GRK5 appears to occur on residues distinct from the residue phosphorylated by other kinases. As to expression, specifically expressed in the peripheral nervous system. High expression in motoneurons of the brainstem. Also found in neurons of many other brain regions including the cerebellar cortex, thalamus, hypothalamus and CA1, CA2, CA3 and CA4 regions of the hippocampus.

Its subcellular location is the cytoplasm. The protein resides in the perinuclear region. The protein localises to the cytoskeleton. It localises to the microtubule organizing center. It is found in the centrosome. Its subcellular location is the spindle. Its function is as follows. Plays a role in neurofilament network integrity. May be involved in modulating axonal architecture during development and in the adult. In vitro, increases the susceptibility of neurofilament-H to calcium-dependent proteases. May also function in modulating the keratin network in skin. Activates the MAPK and Elk-1 signal transduction pathway. The polypeptide is Gamma-synuclein (Sncg) (Rattus norvegicus (Rat)).